Consider the following 359-residue polypeptide: HTH-type transcriptional regulator Rv3575c (359 aa).

Residues 9–64 form the HTH lacI-type domain; that stretch reads ATLASLAAELKVSRTTVSNAFNRPDQLSADLRERVLATAKRLGYAGPDPVARSLRT. A DNA-binding region (H-T-H motif) is located at residues 11-30; that stretch reads LASLAAELKVSRTTVSNAFN.

Functionally, transcriptional regulator that negatively regulates transcription of the mce4 operon, which is involved in cholesterol transport and utilization. Acts by binding to the promoter region of the mce4 operon. It affects the utilization of host cholesterol as a carbon source, impacting the host's innate immune response. In Mycobacterium tuberculosis (strain ATCC 25618 / H37Rv), this protein is HTH-type transcriptional regulator Rv3575c.